The chain runs to 466 residues: MEKWWFNSMLSKEELGHRCGLSKSMDSLDPIDNINSNENMILNFTEKSIHSWSNGSSYSNLDLLFIIGDIPNLISDETFLIRDRKGETYSVYFDIENKIVEIDNYHSFSNYWNSSYGTGSKSNDTHYDLYMYDTKSSLNNHINGCIDSYLHSQMRLDNYVLRDSDHYGDNYIFDDIKTTTKTNGRDKNLEVTKKYRNLWIQCENCYELNYKKLLKSKMRICDECGYHLKMSSSERIELSIDPGTWEPMDEDMVSTDPIEFHSQEEPYKDRINSYQKETGLTDAVQTGIGQLNGIPVAIGVMDFQFMGGSMGSVVGEKITRLAEYATNQNLPLIIVCASGGARMQEGSLSLMQMAKISSALFDYQSNKKLFYVSILTSPTTGGVTASFGMLGDIIISEPSAYIAFAGKRVIEETLNTTVPEGSQEAEYLFDKGLFDPIVPRNPLKGVLSELFRLHAFFPLNQNSIGQ.

The 269-residue stretch at 198–466 (LWIQCENCYE…FPLNQNSIGQ (269 aa)) folds into the CoA carboxyltransferase N-terminal domain. Residues Cys-202, Cys-205, Cys-221, and Cys-224 each contribute to the Zn(2+) site. A C4-type zinc finger spans residues 202–224 (CENCYELNYKKLLKSKMRICDEC).

It belongs to the AccD/PCCB family. In terms of assembly, acetyl-CoA carboxylase is a heterohexamer composed of biotin carboxyl carrier protein, biotin carboxylase and 2 subunits each of ACCase subunit alpha and ACCase plastid-coded subunit beta (accD). It depends on Zn(2+) as a cofactor.

It is found in the plastid. Its subcellular location is the chloroplast stroma. The enzyme catalyses N(6)-carboxybiotinyl-L-lysyl-[protein] + acetyl-CoA = N(6)-biotinyl-L-lysyl-[protein] + malonyl-CoA. It functions in the pathway lipid metabolism; malonyl-CoA biosynthesis; malonyl-CoA from acetyl-CoA: step 1/1. In terms of biological role, component of the acetyl coenzyme A carboxylase (ACC) complex. Biotin carboxylase (BC) catalyzes the carboxylation of biotin on its carrier protein (BCCP) and then the CO(2) group is transferred by the transcarboxylase to acetyl-CoA to form malonyl-CoA. This Fagopyrum esculentum subsp. ancestrale (Wild buckwheat) protein is Acetyl-coenzyme A carboxylase carboxyl transferase subunit beta, chloroplastic.